Consider the following 201-residue polypeptide: UPF0301 protein RHA1_ro03630 (201 aa).

Belongs to the UPF0301 (AlgH) family.

The sequence is that of UPF0301 protein RHA1_ro03630 from Rhodococcus jostii (strain RHA1).